The following is a 339-amino-acid chain: HTH-type transcriptional regulator PtxS (339 aa).

An HTH lacI-type domain is found at 12-67; sequence VTISEVARVAGVSKATVSRYIGGDRQLLAEATAKRLEEVIERLGYRPNQMARGLKR. The segment at residues 14 to 33 is a DNA-binding region (H-T-H motif); that stretch reads ISEVARVAGVSKATVSRYIG.

As to quaternary structure, homodimer in solution.

2-ketogluconate acts as a molecular effector and causes dissociation of PtxS from its target promoter. Negatively regulates glucose metabolism by binding directly to the promoter region of the kgu and gad operons. It also negatively regulates its own synthesis. This chain is HTH-type transcriptional regulator PtxS, found in Pseudomonas putida (strain ATCC 47054 / DSM 6125 / CFBP 8728 / NCIMB 11950 / KT2440).